Consider the following 667-residue polypeptide: Probable potassium transport system protein Kup (667 aa).

The next 12 membrane-spanning stretches (helical) occupy residues 16–36, 58–78, 101–121, 146–166, 167–187, 221–241, 253–273, 294–314, 343–363, 373–393, 399–419, and 431–451; these read GFII…LYTM, VSLI…LIAL, WLII…ALTP, TNVI…QRFG, TGVI…VLGI, IFIL…YSDL, WPFV…WILA, VYLV…LISG, LYIP…VLYF, YGLA…YYLI, PLLA…FFLA, and VVVL…GTVI.

Belongs to the HAK/KUP transporter (TC 2.A.72) family.

It is found in the cell membrane. The catalysed reaction is K(+)(in) + H(+)(in) = K(+)(out) + H(+)(out). Functionally, transport of potassium into the cell. Likely operates as a K(+):H(+) symporter. This chain is Probable potassium transport system protein Kup, found in Streptococcus equi subsp. zooepidemicus (strain MGCS10565).